A 197-amino-acid chain; its full sequence is Large ribosomal subunit protein uL10 (197 aa).

Residues 162-197 form a disordered region; sequence READGETAETPAQETASDDSKSTKAEASDASTTENK. The span at 179–188 shows a compositional bias: basic and acidic residues; it reads DDSKSTKAEA.

Belongs to the universal ribosomal protein uL10 family. In terms of assembly, part of the ribosomal stalk of the 50S ribosomal subunit. The N-terminus interacts with L11 and the large rRNA to form the base of the stalk. The C-terminus forms an elongated spine to which L12 dimers bind in a sequential fashion forming a multimeric L10(L12)X complex.

Its function is as follows. Forms part of the ribosomal stalk, playing a central role in the interaction of the ribosome with GTP-bound translation factors. The sequence is that of Large ribosomal subunit protein uL10 from Oenococcus oeni (strain ATCC BAA-331 / PSU-1).